Here is a 103-residue protein sequence, read N- to C-terminus: Large ribosomal subunit protein uL23 (103 aa).

Belongs to the universal ribosomal protein uL23 family. In terms of assembly, part of the 50S ribosomal subunit. Contacts protein L29, and trigger factor when it is bound to the ribosome.

One of the early assembly proteins it binds 23S rRNA. One of the proteins that surrounds the polypeptide exit tunnel on the outside of the ribosome. Forms the main docking site for trigger factor binding to the ribosome. In Pelodictyon phaeoclathratiforme (strain DSM 5477 / BU-1), this protein is Large ribosomal subunit protein uL23.